A 207-amino-acid chain; its full sequence is Superoxide dismutase [Mn] (207 aa).

Mn(2+) contacts are provided by His27, His82, Asp169, and His173.

This sequence belongs to the iron/manganese superoxide dismutase family. It depends on Mn(2+) as a cofactor.

The enzyme catalyses 2 superoxide + 2 H(+) = H2O2 + O2. In terms of biological role, destroys superoxide anion radicals which are normally produced within the cells and which are toxic to biological systems. The chain is Superoxide dismutase [Mn] (sodA) from Yersinia enterocolitica.